A 226-amino-acid chain; its full sequence is MEGNGSVDMFSEVLENQFLQAAKLVENHLDSEIQKLDQIGEDELELLKEKRLAALRKAQQQKQEWLSKGHGEYREIGSERDFFQEVKESEKVVCHFYRDTTFRCKILDRHLAILAKKHLETKFLKLNVEKAPFLCERLRIKVIPTLALLRDGKTQDYVVGFTDLGNTDDFTTETLEWRLGCSDVINYSGNLMEPPFQSQKKFGTNFTKLEKKTIRGKKYDSDSDDD.

Residues 75-180 (EIGSERDFFQ…TTETLEWRLG (106 aa)) form the Thioredoxin domain. 3 positions are modified to phosphoserine: Ser-188, Ser-221, and Ser-223.

In terms of assembly, forms ternary complexes with the chaperonin TCP1 complex, spanning the cylindrical chaperonin cavity and contacting at least 2 subunits. In terms of tissue distribution, expressed in testis, liver, heart, kidney, brain, spleen and lung.

It is found in the cytoplasm. It localises to the nucleus. Its subcellular location is the cytoskeleton. The protein resides in the microtubule organizing center. The protein localises to the centrosome. It is found in the midbody. Its function is as follows. Significantly diminishes the chaperonin TCP1 complex ATPase activity, thus negatively impacts protein folding, including that of actin or tubulin. The sequence is that of Thioredoxin domain-containing protein 9 (Txndc9) from Mus musculus (Mouse).